We begin with the raw amino-acid sequence, 387 residues long: ADP,ATP carrier protein 2, mitochondrial (387 aa).

A mitochondrion-targeting transit peptide spans 1 to 77 (MADQANQPTV…PVMPTPLFAN (77 aa)). Solcar repeat units follow at residues 85 to 178 (KNFM…FKRL), 190 to 282 (KWFA…IKPV), and 290 to 376 (DNFF…LQIL). The next 5 helical transmembrane spans lie at 87–114 (FMID…VKLL), 155–179 (TANV…KRLF), 188–208 (YWKW…SSLF), 258–279 (FNIS…YDSI), and 293–313 (FASF…SYPI). ADP-binding residues include Arg160 and Lys172. An ADP-binding site is contributed by Arg317. Residues 317–322 (RRRMMM) are important for transport activity. The short motif at 317–322 (RRRMMM) is the Nucleotide carrier signature motif element. Residues 353 to 373 (AGANILRAIAGAGVLSGYDQL) form a helical membrane-spanning segment.

This sequence belongs to the mitochondrial carrier (TC 2.A.29) family. In terms of assembly, monomer.

The protein localises to the mitochondrion inner membrane. The enzyme catalyses ADP(in) + ATP(out) = ADP(out) + ATP(in). Its activity is regulated as follows. The matrix-open state (m-state) is inhibited by the membrane-permeable bongkrekic acid (BKA). The cytoplasmic-open state (c-state) is inhibited by the membrane-impermeable toxic inhibitor carboxyatractyloside (CATR). Its function is as follows. ADP:ATP antiporter that mediates import of ADP into the mitochondrial matrix for ATP synthesis, and export of ATP out to fuel the cell. Cycles between the cytoplasmic-open state (c-state) and the matrix-open state (m-state): operates by the alternating access mechanism with a single substrate-binding site intermittently exposed to either the cytosolic (c-state) or matrix (m-state) side of the inner mitochondrial membrane. The chain is ADP,ATP carrier protein 2, mitochondrial (ANT2) from Zea mays (Maize).